A 283-amino-acid chain; its full sequence is NAD kinase (283 aa).

Residue Asp66 is the Proton acceptor of the active site. Residues 66-67 (DG), 134-135 (ND), Arg145, Arg163, Asp165, and 176-181 (TAYSMS) each bind NAD(+).

The protein belongs to the NAD kinase family. Requires a divalent metal cation as cofactor.

The protein resides in the cytoplasm. The catalysed reaction is NAD(+) + ATP = ADP + NADP(+) + H(+). Involved in the regulation of the intracellular balance of NAD and NADP, and is a key enzyme in the biosynthesis of NADP. Catalyzes specifically the phosphorylation on 2'-hydroxyl of the adenosine moiety of NAD to yield NADP. This chain is NAD kinase, found in Chlorobaculum tepidum (strain ATCC 49652 / DSM 12025 / NBRC 103806 / TLS) (Chlorobium tepidum).